Reading from the N-terminus, the 361-residue chain is D-alanine--D-alanine ligase (361 aa).

An ATP-grasp domain is found at 139–336 (KLLLKEKEIS…FSQIIDNMIN (198 aa)). ATP is bound at residue 167-222 (EKNLGYPMIVKPARLGSSIGVSKVVDRKNFEEAVKNVLLFDNKVLVEKWINAREIN). The Mg(2+) site is built by Asp296, Glu307, and Asn309.

This sequence belongs to the D-alanine--D-alanine ligase family. The cofactor is Mg(2+). It depends on Mn(2+) as a cofactor.

It is found in the cytoplasm. The catalysed reaction is 2 D-alanine + ATP = D-alanyl-D-alanine + ADP + phosphate + H(+). Its pathway is cell wall biogenesis; peptidoglycan biosynthesis. Cell wall formation. The sequence is that of D-alanine--D-alanine ligase from Thermosipho melanesiensis (strain DSM 12029 / CIP 104789 / BI429).